The chain runs to 311 residues: Protoheme IX farnesyltransferase (311 aa).

The next 9 helical transmembrane spans lie at 33–53, 55–75, 104–124, 127–147, 155–175, 181–201, 228–248, 252–272, and 287–307; these read VVML…PSPA, LWLL…AAAV, NALL…SSFI, LTAW…TLFL, IVIG…AVTG, GLLL…ALAL, IVLY…TRMM, YLVG…KLLV, and IIYL…FPIP.

It belongs to the UbiA prenyltransferase family. Protoheme IX farnesyltransferase subfamily.

It is found in the cell inner membrane. It carries out the reaction heme b + (2E,6E)-farnesyl diphosphate + H2O = Fe(II)-heme o + diphosphate. It functions in the pathway porphyrin-containing compound metabolism; heme O biosynthesis; heme O from protoheme: step 1/1. Its function is as follows. Converts heme B (protoheme IX) to heme O by substitution of the vinyl group on carbon 2 of heme B porphyrin ring with a hydroxyethyl farnesyl side group. The protein is Protoheme IX farnesyltransferase of Teredinibacter turnerae (strain ATCC 39867 / T7901).